Consider the following 843-residue polypeptide: MMPPTRLAGTLIPAMAFLSCLRPESWDPCVQVVPNTTYQCMDLNLYKIPENIPTSTKELDLSFNPLKELGSHSFSNFPELQVLDLSRCEIEMIEDDAYQGLNHLSTLILTGNPIRSLALGAFSGLSSLQTLVAVETKLSSLEKFPIGHLKTLKELNVAHNLIHSFKLPEYFSKMPNLEHLDLSNNKIQNISHEDLRVLHQMPLLNLSLDLSLNPLEFIQPDAFKEIKLHKLTLRSNFDSIDVMKSCIQGLAGLKVNRLVLGEFKNERKLERFDTSALRGLHNLTIEEFRLAYIDNYSSKDSIDLLNCLADISKISLVSLDLGNLKDFPKGFGWQDFELVNCRIEGFPTLELTSLKRLVFTSNKDMKSFNEVKLPSLEFLDLSRNRLSFKSCCSEADLKTTRLKHLDLSFNDVISMSSNFMGLEQLEHLDFQHSTLKQASDFPVFLSLKNLRYLDISYTNTRVVFHGIFDGLVSLQVLKMAGNSFKDNFLPNIFREMTNLTTLDLSKCNLEQVSQEAFCLLPRLRVLNMSHNNLLFLDMLPYKPLHSLQILDCSFNRIVAFKWQELQHFPSSLASLNLTQNDFACVCEYQSFLQWVKDQRQLLVEVEHLVCAIPLQMRGMPVLGFNNATCQISKTIVGGSVFSILMVSVIAVLVYKFYFHLMLLAGCKKYGRGESIYDAFVIYSSQDEDWVRNELVKNLEEGVPPFQLCLHYRDFIPGVAIAANIIQEGFHKSRKVIVVVSQHFIQSRWCIFEYEIAQTWQFLSSRAGIIFIVLHKLEKSLLRQQVELYRLLNRNTYLEWEDSVLGRHIFWRRLRKALLDGKPWSPAGTADAAESRQHDAETST.

The signal sequence occupies residues 1 to 23 (MMPPTRLAGTLIPAMAFLSCLRP). Positions 24-54 (ESWDPCVQVVPNTTYQCMDLNLYKIPENIPT) constitute an LRRNT domain. Topologically, residues 24–633 (ESWDPCVQVV…FNNATCQISK (610 aa)) are extracellular. C29 and C40 are oxidised to a cystine. An N-linked (GlcNAc...) asparagine glycan is attached at N35. LRR repeat units lie at residues 55 to 76 (STKELDLSFNPLKELGSHSFSN), 79 to 100 (ELQVLDLSRCEIEMIEDDAYQG), 103 to 124 (HLSTLILTGNPIRSLALGAFSG), 127 to 148 (SLQTLVAVETKLSSLEKFPIGH), 151 to 172 (TLKELNVAHNLIHSFKLPEYFS), 176 to 197 (NLEHLDLSNNKIQNISHEDLRV), 205 to 225 (NLSLDLSLNPLEFIQPDAFKE), and 227 to 247 (KLHKLTLRSNFDSIDVMKSCI). N-linked (GlcNAc...) asparagine glycans are attached at residues N189 and N205. N-linked (GlcNAc...) asparagine glycosylation is found at N282 and N295. LRR repeat units lie at residues 353 to 374 (SLKRLVFTSNKDMKSFNEVKLP), 375 to 398 (SLEFLDLSRNRLSFKSCCSEADLK), 401 to 423 (RLKHLDLSFNDVISMSSNFMGLE), 424 to 445 (QLEHLDFQHSTLKQASDFPVFL), 449 to 459 (NLRYLDISYTN), 473 to 496 (SLQVLKMAGNSFKDNFLPNIFREM), 498 to 519 (NLTTLDLSKCNLEQVSQEAFCL), 522 to 543 (RLRVLNMSHNNLLFLDMLPYKP), and 546 to 569 (SLQILDCSFNRIVAFKWQELQHFP). Cysteines 391 and 392 form a disulfide. 2 N-linked (GlcNAc...) asparagine glycosylation sites follow: N498 and N527. A glycan (N-linked (GlcNAc...) asparagine) is linked at N576. Residues 580–631 (NDFACVCEYQSFLQWVKDQRQLLVEVEHLVCAIPLQMRGMPVLGFNNATCQI) form the LRRCT domain. 2 disulfide bridges follow: C584/C610 and C586/C629. N-linked (GlcNAc...) asparagine glycosylation is present at N626. A helical membrane pass occupies residues 634 to 654 (TIVGGSVFSILMVSVIAVLVY). The Cytoplasmic segment spans residues 655–843 (KFYFHLMLLA…SRQHDAETST (189 aa)). Residues 674-817 (SIYDAFVIYS…IFWRRLRKAL (144 aa)) form the TIR domain. Positions 824 to 843 (SPAGTADAAESRQHDAETST) are disordered. Residues 832–843 (AESRQHDAETST) are compositionally biased toward basic and acidic residues.

This sequence belongs to the Toll-like receptor family. In terms of assembly, belongs to the lipopolysaccharide (LPS) receptor, a multi-protein complex containing at least CD14, LY96 and TLR4. Binding to bacterial LPS leads to homodimerization. Interacts with LY96 via the extracellular domain. Interacts with MYD88 and TIRAP via their respective TIR domains. Interacts with NOX4. Interacts with CNPY3 and HSP90B1; this interaction is required for proper folding in the endoplasmic reticulum. Interacts with MAP3K21; this interaction leads to negative regulation of TLR4 signaling. Interacts with CD36, following CD36 stimulation by oxLDL or amyloid-beta 42, and forms a heterodimer with TLR6. The trimeric complex is internalized and triggers inflammatory response. LYN kinase activity facilitates TLR4-TLR6 heterodimerization and signal initiation. Interacts with TICAM1 in response to LPS in a WDFY1-dependent manner. Interacts with WDFY1 in response to LPS. Interacts with SMPDL3B. Interacts with CEACAM1; upon lipopolysaccharide stimulation, forms a complex including TLR4 and the phosphorylated form of SYK and CEACAM1, which in turn, recruits PTPN6 that dephosphorylates SYK, reducing the production of reactive oxygen species (ROS) and lysosome disruption, which in turn, reduces the activity of the inflammasome. Interacts with RFTN1; the interaction occurs in response to lipopolysaccharide stimulation. Interacts with SCIMP; the interaction occurs in response to lipopolysaccharide stimulation and is enhanced by phosphorylation of SCIMP by LYN. This interaction facilitates the phosphorylation of TLR4 by LYN which elicits a selective cytokine response in macrophages. Interacts with TRAF3IP3. Interacts with TREM1; this interaction enhances TLR4-mediated inflammatory response. Interacts with ZG16B/PAUF. Interacts with CD82; this interaction inhibits TLR4-mediated signaling pathway. In terms of processing, phosphorylated on tyrosine residues by LYN after binding lipopolysaccharide. Ubiquitinated by RNF128 via 'Lys-28'-linked polyubiquitin chains, leading to proteasomal degradation.

Its subcellular location is the cell membrane. The protein localises to the early endosome. It is found in the cell projection. It localises to the ruffle. Functionally, transmembrane receptor that functions as a pattern recognition receptor recognizing pathogen- and damage-associated molecular patterns (PAMPs and DAMPs) to induce innate immune responses via downstream signaling pathways. At the plasma membrane, cooperates with LY96 to mediate the innate immune response to bacterial lipopolysaccharide (LPS). Also involved in LPS-independent inflammatory responses triggered by free fatty acids, such as palmitate, and Ni(2+). Mechanistically, acts via MYD88, TIRAP and TRAF6, leading to NF-kappa-B activation, cytokine secretion and the inflammatory response. Alternatively, CD14-mediated TLR4 internalization via endocytosis is associated with the initiation of a MYD88-independent signaling via the TICAM1-TBK1-IRF3 axis leading to type I interferon production. In addition to the secretion of proinflammatory cytokines, initiates the activation of NLRP3 inflammasome and formation of a positive feedback loop between autophagy and NF-kappa-B signaling cascade. In complex with TLR6, promotes inflammation in monocytes/macrophages by associating with TLR6 and the receptor CD86. Upon ligand binding, such as oxLDL or amyloid-beta 42, the TLR4:TLR6 complex is internalized and triggers inflammatory response, leading to NF-kappa-B-dependent production of CXCL1, CXCL2 and CCL9 cytokines, via MYD88 signaling pathway, and CCL5 cytokine, via TICAM1 signaling pathway. In myeloid dendritic cells, vesicular stomatitis virus glycoprotein G but not LPS promotes the activation of IRF7, leading to type I IFN production in a CD14-dependent manner. The protein is Toll-like receptor 4 (TLR4) of Equus caballus (Horse).